A 464-amino-acid polypeptide reads, in one-letter code: GTPase Der (464 aa).

EngA-type G domains are found at residues 3–166 (ALVA…PVLE) and 177–350 (LQFA…QSAN). Residues 9–16 (GRPNVGKS), 56–60 (DTGGV), 118–121 (NKAE), 183–190 (GRPNVGKS), 230–234 (DTAGI), and 295–298 (NKWD) each bind GTP. The 85-residue stretch at 351–435 (SHLPTGELNR…PIALEFRTVK (85 aa)) folds into the KH-like domain.

This sequence belongs to the TRAFAC class TrmE-Era-EngA-EngB-Septin-like GTPase superfamily. EngA (Der) GTPase family. Associates with the 50S ribosomal subunit.

Functionally, GTPase that plays an essential role in the late steps of ribosome biogenesis. This is GTPase Der from Nitrosococcus oceani (strain ATCC 19707 / BCRC 17464 / JCM 30415 / NCIMB 11848 / C-107).